The following is a 485-amino-acid chain: Glycogen synthase (485 aa).

Residue Lys-15 coordinates ADP-alpha-D-glucose.

It belongs to the glycosyltransferase 1 family. Bacterial/plant glycogen synthase subfamily.

The enzyme catalyses [(1-&gt;4)-alpha-D-glucosyl](n) + ADP-alpha-D-glucose = [(1-&gt;4)-alpha-D-glucosyl](n+1) + ADP + H(+). It functions in the pathway glycan biosynthesis; glycogen biosynthesis. Its function is as follows. Synthesizes alpha-1,4-glucan chains using ADP-glucose. The chain is Glycogen synthase from Francisella philomiragia subsp. philomiragia (strain ATCC 25017 / CCUG 19701 / FSC 153 / O#319-036).